A 562-amino-acid polypeptide reads, in one-letter code: MFS-type transporter calB (562 aa).

The segment covering Met-1–Glu-16 has biased composition (polar residues). The segment at Met-1–Glu-45 is disordered. A helical membrane pass occupies residues Phe-57–Ile-77. Asn-83 is a glycosylation site (N-linked (GlcNAc...) asparagine). The next 13 membrane-spanning stretches (helical) occupy residues Ile-94–Gly-113, Trp-123–Asn-143, Val-154–Val-174, Gly-184–Leu-204, Cys-213–Val-233, Leu-256–Gly-276, Ser-284–Trp-304, Ile-329–Phe-349, Val-362–Val-382, Leu-389–Phe-409, Trp-418–Ile-438, Val-451–Gly-471, and Val-530–Trp-550. Asn-557 is a glycosylation site (N-linked (GlcNAc...) asparagine).

The protein belongs to the major facilitator superfamily. TCR/Tet family.

It is found in the cell membrane. Its function is as follows. MFS-type transporter; part of the gene cluster that mediates the biosynthesis of calbistrin A and related compounds. Calbistrin A is a secondary metabolite with an interesting structure that was recently found to have bioactivity against leukemia cells. It consists of two polyketides linked by an ester bond: a bicyclic decalin containing polyketide and a linear 12 carbon dioic acid structure. Required for the secretion of calbistrin A and calbistrin C, as well as of related compounds decumbenone A, B and C. In Penicillium decumbens, this protein is MFS-type transporter calB.